A 625-amino-acid polypeptide reads, in one-letter code: Probable receptor-like protein kinase At1g11050 (625 aa).

An N-terminal signal peptide occupies residues 1–20; the sequence is MPNSILFLLLSFLYLTNCVA. The Extracellular portion of the chain corresponds to 21–227; sequence QSPSQTCPLD…PLNSKKKRHT (207 aa). N-linked (GlcNAc...) asparagine glycosylation is found at asparagine 40, asparagine 106, asparagine 121, and asparagine 177. The helical transmembrane segment at 228–248 threads the bilayer; that stretch reads VALALGITGAIFGALVIAGLI. Topologically, residues 249 to 625 are cytoplasmic; sequence CLYFRFGKAV…LQIHSGDMLR (377 aa). Positions 295–555 constitute a Protein kinase domain; sequence FSQKNFIGRG…NPKGIMERFL (261 aa). Residues 301–309 and lysine 323 contribute to the ATP site; that span reads IGRGGFGFV. Catalysis depends on aspartate 426, which acts as the Proton acceptor.

This sequence belongs to the protein kinase superfamily. Ser/Thr protein kinase family.

The protein resides in the membrane. It catalyses the reaction L-seryl-[protein] + ATP = O-phospho-L-seryl-[protein] + ADP + H(+). The catalysed reaction is L-threonyl-[protein] + ATP = O-phospho-L-threonyl-[protein] + ADP + H(+). The polypeptide is Probable receptor-like protein kinase At1g11050 (Arabidopsis thaliana (Mouse-ear cress)).